The sequence spans 178 residues: uncharacterized protein (178 aa).

The N-acetyltransferase domain occupies 9–173; the sequence is LTLRKMELED…IDVYMFSLLK (165 aa).

This is an uncharacterized protein from Bacillus licheniformis.